The following is a 134-amino-acid chain: Profilin-2 (134 aa).

An intrachain disulfide couples Cys-13 to Cys-118. Positions 84 to 100 (AVIRGKKGSGGITIKKT) match the Involved in PIP2 interaction motif. Thr-114 is modified (phosphothreonine).

It belongs to the profilin family. As to quaternary structure, occurs in many kinds of cells as a complex with monomeric actin in a 1:1 ratio. Post-translationally, phosphorylated by MAP kinases.

The protein localises to the cytoplasm. Its subcellular location is the cytoskeleton. Its function is as follows. Binds to actin and affects the structure of the cytoskeleton. At high concentrations, profilin prevents the polymerization of actin, whereas it enhances it at low concentrations. This is Profilin-2 from Olea europaea (Common olive).